A 148-amino-acid chain; its full sequence is Deoxyuridine 5'-triphosphate nucleotidohydrolase (148 aa).

Substrate is bound by residues 67–69 (RSG), asparagine 80, 84–86 (LID), and methionine 94.

Belongs to the dUTPase family. Mg(2+) is required as a cofactor.

The catalysed reaction is dUTP + H2O = dUMP + diphosphate + H(+). It functions in the pathway pyrimidine metabolism; dUMP biosynthesis; dUMP from dCTP (dUTP route): step 2/2. In terms of biological role, this enzyme is involved in nucleotide metabolism: it produces dUMP, the immediate precursor of thymidine nucleotides and it decreases the intracellular concentration of dUTP so that uracil cannot be incorporated into DNA. The protein is Deoxyuridine 5'-triphosphate nucleotidohydrolase of Burkholderia cenocepacia (strain HI2424).